A 191-amino-acid polypeptide reads, in one-letter code: dTTP/UTP pyrophosphatase (191 aa).

Asp68 serves as the catalytic Proton acceptor.

The protein belongs to the Maf family. YhdE subfamily. A divalent metal cation is required as a cofactor.

Its subcellular location is the cytoplasm. It carries out the reaction dTTP + H2O = dTMP + diphosphate + H(+). The catalysed reaction is UTP + H2O = UMP + diphosphate + H(+). In terms of biological role, nucleoside triphosphate pyrophosphatase that hydrolyzes dTTP and UTP. May have a dual role in cell division arrest and in preventing the incorporation of modified nucleotides into cellular nucleic acids. The polypeptide is dTTP/UTP pyrophosphatase (Thermoanaerobacter pseudethanolicus (strain ATCC 33223 / 39E) (Clostridium thermohydrosulfuricum)).